Consider the following 515-residue polypeptide: MVVAYKHEPFTDFSVEANKLAFEEGLKKVESYLGQDYPLIIGGEKITTEDKIVSVNPANKEEVIGSVSKASRELAEKAMQVADETFQTWRKSKPEMRADILFRAAAIVRRRKHEFSAILVKEAGKPWNEADADTAEAIDFMEYYGRQMLKLKDGIPVESRPIEYNRFSYIPLGVGVIISPWNFPFAIMAGMTTAALVSGNTVLLKPASTTPVVAAKFMEVLEEAGLPAGVVNFIPGSGSEVGDYLVDHPRTRFISFTGSRDVGIRIYERAAKVHPGQIWLKRVIAEMGGKDTIVVDKEADLELAAKSIVASAFGFSGQKCSACSRAVIHEEVYDQVLNRAVELTKELTVGNPAEKGTNMGPVNDQAAFDKVMSYVAIGKEEGKIVAGGEGDDSKGWFIQPTIVADVAEDARLMKEEIFGPVVAFCKAKDFDHALAIANNTEYGLTGAVISNNRAHIEKAREDFHVGNLYFNRGCTGAIVGYQPFGGFNMSGTDSKAGGPDYLALHMQAKTTSEML.

Active-site residues include Glu286 and Cys320.

Belongs to the aldehyde dehydrogenase family. RocA subfamily.

It carries out the reaction L-glutamate 5-semialdehyde + NAD(+) + H2O = L-glutamate + NADH + 2 H(+). The protein operates within amino-acid degradation; L-proline degradation into L-glutamate; L-glutamate from L-proline: step 2/2. In Bacillus cytotoxicus (strain DSM 22905 / CIP 110041 / 391-98 / NVH 391-98), this protein is 1-pyrroline-5-carboxylate dehydrogenase.